Consider the following 404-residue polypeptide: Serine palmitoyltransferase (404 aa).

Residues 112–113 (GY), serine 185, histidine 213, and threonine 241 contribute to the pyridoxal 5'-phosphate site. N6-(pyridoxal phosphate)lysine is present on lysine 244.

It belongs to the class-II pyridoxal-phosphate-dependent aminotransferase family. Requires pyridoxal 5'-phosphate as cofactor.

The protein resides in the cytoplasm. It carries out the reaction L-serine + hexadecanoyl-CoA + H(+) = 3-oxosphinganine + CO2 + CoA. The protein operates within lipid metabolism; sphingolipid metabolism. In terms of biological role, involved in de novo bacterial ceramide synthesis. Catalyzes the condensation of L-serine with palmitoyl-CoA (hexadecanoyl-CoA) to produce 3-oxosphinganine. Can also condense serine and C16:1-CoA, but shows a preference for palmitoyl-CoA. This Caulobacter vibrioides (strain NA1000 / CB15N) (Caulobacter crescentus) protein is Serine palmitoyltransferase.